The primary structure comprises 236 residues: Phosphatidylserine decarboxylase proenzyme (236 aa).

S194 acts as the Schiff-base intermediate with substrate; via pyruvic acid in catalysis. At S194 the chain carries Pyruvic acid (Ser); by autocatalysis.

This sequence belongs to the phosphatidylserine decarboxylase family. PSD-A subfamily. As to quaternary structure, heterodimer of a large membrane-associated beta subunit and a small pyruvoyl-containing alpha subunit. The cofactor is pyruvate. Post-translationally, is synthesized initially as an inactive proenzyme. Formation of the active enzyme involves a self-maturation process in which the active site pyruvoyl group is generated from an internal serine residue via an autocatalytic post-translational modification. Two non-identical subunits are generated from the proenzyme in this reaction, and the pyruvate is formed at the N-terminus of the alpha chain, which is derived from the carboxyl end of the proenzyme. The post-translation cleavage follows an unusual pathway, termed non-hydrolytic serinolysis, in which the side chain hydroxyl group of the serine supplies its oxygen atom to form the C-terminus of the beta chain, while the remainder of the serine residue undergoes an oxidative deamination to produce ammonia and the pyruvoyl prosthetic group on the alpha chain.

The protein localises to the cell membrane. It carries out the reaction a 1,2-diacyl-sn-glycero-3-phospho-L-serine + H(+) = a 1,2-diacyl-sn-glycero-3-phosphoethanolamine + CO2. It participates in phospholipid metabolism; phosphatidylethanolamine biosynthesis; phosphatidylethanolamine from CDP-diacylglycerol: step 2/2. In terms of biological role, catalyzes the formation of phosphatidylethanolamine (PtdEtn) from phosphatidylserine (PtdSer). This Rhodospirillum rubrum (strain ATCC 11170 / ATH 1.1.1 / DSM 467 / LMG 4362 / NCIMB 8255 / S1) protein is Phosphatidylserine decarboxylase proenzyme.